Reading from the N-terminus, the 116-residue chain is Putative gamma-glutamylcyclotransferase PH0828 (116 aa).

Residue 13–16 participates in substrate binding; that stretch reads YGTL. Glu76 functions as the Proton acceptor in the catalytic mechanism.

This sequence belongs to the gamma-glutamylcyclotransferase family.

Its function is as follows. Putative gamma-glutamylcyclotransferase. The chain is Putative gamma-glutamylcyclotransferase PH0828 from Pyrococcus horikoshii (strain ATCC 700860 / DSM 12428 / JCM 9974 / NBRC 100139 / OT-3).